The sequence spans 1482 residues: Cystic fibrosis transmembrane conductance regulator (1482 aa).

The Cytoplasmic portion of the chain corresponds to 1–77 (MQRSPLEKAS…KLINALRRCF (77 aa)). The helical transmembrane segment at 78–98 (FWRFTFYGIILYLGEVTKAVQ) threads the bilayer. An ABC transmembrane type-1 1 domain is found at 81–365 (FTFYGIILYL…WAVQTWYDSL (285 aa)). The Extracellular segment spans residues 99–122 (PLLLGRIIASYDPDNKVERSIAIY). Residues 123-146 (LAVGLCLLFVVRTLLLHPAIFGLH) traverse the membrane as a helical segment. Topologically, residues 147–195 (HIGMQMRIAMFSLIYKKTLKLSSRVLDKISIGQLVSLLSNNLNKFDEGL) are cytoplasmic. A helical transmembrane segment spans residues 196-216 (ALAHFVWIAPLQVTLLMGLLW). Topologically, residues 217–222 (DLLQAS) are extracellular. A helical membrane pass occupies residues 223–243 (AFSGLGVLIILACFQAGFGRM). The Cytoplasmic segment spans residues 244-298 (MMKYRDQRAGKINERLVITSEMIENIQSVKAYCWEEALEKMIENFRQSELRLTRK). Residues 299–319 (AAYVRYFNSSAFFFSGFFVVF) form a helical membrane-spanning segment. Over 320 to 339 (LSVLPYALIKGIILRKIFTT) the chain is Extracellular. Residues 340–358 (ISFCIVLRMAVTRQFPWAV) traverse the membrane as a helical segment. Residues 359–859 (QTWYDSLGAI…YLRYITVHKR (501 aa)) are Cytoplasmic-facing. ATP contacts are provided by residues Trp401, Ser434, 458-465 (GSTGAGKT), and Gln493. An ABC transporter 1 domain is found at 423–646 (NVDNSLFFSN…RPDFSSKLMG (224 aa)). The S-palmitoyl cysteine moiety is linked to residue Cys524. Residues Ser549 and Ser660 each carry the phosphoserine modification. Residues 654–832 (SAERRNSIIT…EEINEEDLKE (179 aa)) are disordered R region. Ser670 carries the phosphoserine; by PKA modification. Ser686 is modified (phosphoserine). Lys688 is covalently cross-linked (Glycyl lysine isopeptide (Lys-Gly) (interchain with G-Cter in ubiquitin)). Ser700 and Ser712 each carry phosphoserine. Thr717 is modified (phosphothreonine). 4 positions are modified to phosphoserine: Ser737, Ser768, Ser796, and Ser814. Residues 860-880 (LIFVLIWCFVVFLIEVAASLV) form a helical membrane-spanning segment. Residues 860–1156 (LIFVLIWCFV…AVNSSIDVDS (297 aa)) form the ABC transmembrane type-1 2 domain. Residues 881–919 (LLCLLSKVSPEDKGNTTKSANDSSAVIITSTSSFYFLYI) lie on the Extracellular side of the membrane. 2 N-linked (GlcNAc...) asparagine glycosylation sites follow: Asn895 and Asn901. A discontinuously helical transmembrane segment spans residues 920–940 (YVGVADTFLALGLFRGLPLVH). The Cytoplasmic segment spans residues 941–991 (TLITVSKILHHKMLHSVLQAPMSTLNTLKAGGILNRFSKDIAILDDLLPLT). Residues 992 to 1012 (IFDFIQLLLIVIGAVAVVSIL) traverse the membrane as a helical segment. Topologically, residues 1013–1014 (KP) are extracellular. A helical transmembrane segment spans residues 1015–1035 (YIFLATVPVIVAFVLLRAYFL). At 1036 to 1096 (HTSQQLKQLE…TANWFLYLST (61 aa)) the chain is on the cytoplasmic side. Residues 1097–1117 (LRWFQMRIEMIFVIFFIAVTF) traverse the membrane as a helical segment. Topologically, residues 1118-1131 (ISILTTGEGEGTVG) are extracellular. The helical transmembrane segment at 1132 to 1152 (IILTLAMNIMSTLQWAVNSSI) threads the bilayer. Topologically, residues 1153 to 1482 (DVDSLMRSVS…TEEEVQDTRL (330 aa)) are cytoplasmic. The 234-residue stretch at 1212–1445 (MTVKDLTAKY…KSLFRQAISP (234 aa)) folds into the ABC transporter 2 domain. ATP-binding positions include Tyr1221 and 1246-1253 (GRTGSGKS). The tract at residues 1388-1482 (RTLKQAFADC…TEEEVQDTRL (95 aa)) is interaction with GORASP2. Cys1397 is lipidated: S-palmitoyl cysteine. Ser1446 bears the Phosphoserine mark. Positions 1450–1482 (KLFPHQNSGKHKSRSKITALKEETEEEVQDTRL) are disordered. Residues 1472–1482 (ETEEEVQDTRL) show a composition bias toward acidic residues. Positions 1480 to 1482 (TRL) match the PDZ-binding motif.

Belongs to the ABC transporter superfamily. ABCC family. CFTR transporter (TC 3.A.1.202) subfamily. In terms of assembly, monomer; does not require oligomerization for channel activity. May form oligomers in the membrane. Interacts with SLC26A3, SLC26A6 and NHERF1. Interacts with SHANK2. Interacts with MYO6. Interacts (via C-terminus) with GOPC (via PDZ domain); this promotes CFTR internalization and thereby decreases channel activity. Interacts with SLC4A7 through NHERF1. Found in a complex with MYO5B and RAB11A. Interacts with ANO1. Interacts with SLC26A8. Interacts with AHCYL1; the interaction increases CFTR activity. Interacts with CSE1L. The core-glycosylated form interacts with GORASP2 (via PDZ GRASP-type 1 domain) in respone to ER stress. Interacts with MARCHF2; the interaction leads to CFTR ubiqtuitination and degradation. Interacts with ADGRG2. N-glycosylated. Post-translationally, phosphorylated; cAMP treatment promotes phosphorylation and activates the channel. Dephosphorylation decreases the ATPase activity (in vitro). Phosphorylation at PKA sites activates the channel. Phosphorylation at PKC sites enhances the response to phosphorylation by PKA. Phosphorylated by AMPK; this inhibits channel activity. In terms of processing, ubiquitinated, leading to its degradation in the lysosome. Deubiquitination by USP10 in early endosomes enhances its endocytic recycling to the cell membrane. Ubiquitinated by RNF185 during ER stress. Ubiquitinated by MARCHF2.

The protein localises to the apical cell membrane. It localises to the early endosome membrane. Its subcellular location is the cell membrane. The protein resides in the recycling endosome membrane. It is found in the endoplasmic reticulum membrane. The protein localises to the nucleus. The catalysed reaction is ATP + H2O + closed Cl(-) channel = ADP + phosphate + open Cl(-) channel.. It catalyses the reaction chloride(in) = chloride(out). The enzyme catalyses hydrogencarbonate(in) = hydrogencarbonate(out). It carries out the reaction ATP + H2O = ADP + phosphate + H(+). Its function is as follows. Epithelial ion channel that plays an important role in the regulation of epithelial ion and water transport and fluid homeostasis. Mediates the transport of chloride ions across the cell membrane. Possesses an intrinsic ATPase activity and utilizes ATP to gate its channel; the passive flow of anions through the channel is gated by cycles of ATP binding and hydrolysis by the ATP-binding domains. The ion channel is also permeable to HCO(3)(-); selectivity depends on the extracellular chloride concentration. Exerts its function also by modulating the activity of other ion channels and transporters. Contributes to the regulation of the pH and the ion content of the epithelial fluid layer. Modulates the activity of the epithelial sodium channel (ENaC) complex, in part by regulating the cell surface expression of the ENaC complex. May regulate bicarbonate secretion and salvage in epithelial cells by regulating the transporter SLC4A7. Can inhibit the chloride channel activity of ANO1. Plays a role in the chloride and bicarbonate homeostasis during sperm epididymal maturation and capacitation. This is Cystic fibrosis transmembrane conductance regulator from Dasypus novemcinctus (Nine-banded armadillo).